The chain runs to 329 residues: MTTPGTDHNADQGADSGDKATKAASGAQTEREVLLVAHTGVHENLGLAAEAASRLQKGGINVRVMATADPAPVARHEVLGRFKRFGHTKEAATGVEMVIVLGGDGTFLRAADIAHSADVPVLGINMGHIGFLAEWEQESLQEAVDRVIDRDYRIEDRMTLSITARDMDGRVLGTGWALNECSVENLNRQGVLDTILEVDERPVSSFGCDGVLVSTPTGSTAYAFSAGGPVLWPELDAILVVTSNAHTLFSRPLVVSPNSMVAVETNPSTSPATVVMDGFRQIHMPPGARVEIRRGPQPVRWVRLDSAPFTDRLVHKFRLPVTGWRGPRH.

Positions 1–26 (MTTPGTDHNADQGADSGDKATKAASG) are disordered. The active-site Proton acceptor is the Asp104. Residues 104 to 105 (DG), Arg109, 179 to 180 (NE), Asp209, and 220 to 225 (TAYAFS) each bind NAD(+).

Belongs to the NAD kinase family. The cofactor is a divalent metal cation.

Its subcellular location is the cytoplasm. The catalysed reaction is NAD(+) + ATP = ADP + NADP(+) + H(+). Functionally, involved in the regulation of the intracellular balance of NAD and NADP, and is a key enzyme in the biosynthesis of NADP. Catalyzes specifically the phosphorylation on 2'-hydroxyl of the adenosine moiety of NAD to yield NADP. This is NAD kinase from Corynebacterium jeikeium (strain K411).